The following is a 222-amino-acid chain: 2-C-methyl-D-erythritol 4-phosphate cytidylyltransferase (222 aa).

Belongs to the IspD/TarI cytidylyltransferase family. IspD subfamily.

The enzyme catalyses 2-C-methyl-D-erythritol 4-phosphate + CTP + H(+) = 4-CDP-2-C-methyl-D-erythritol + diphosphate. It participates in isoprenoid biosynthesis; isopentenyl diphosphate biosynthesis via DXP pathway; isopentenyl diphosphate from 1-deoxy-D-xylulose 5-phosphate: step 2/6. Catalyzes the formation of 4-diphosphocytidyl-2-C-methyl-D-erythritol from CTP and 2-C-methyl-D-erythritol 4-phosphate (MEP). In Thermotoga petrophila (strain ATCC BAA-488 / DSM 13995 / JCM 10881 / RKU-1), this protein is 2-C-methyl-D-erythritol 4-phosphate cytidylyltransferase.